We begin with the raw amino-acid sequence, 290 residues long: uncharacterized protein (290 aa).

Disordered regions lie at residues 1-98 and 209-236; these read MLGQ…SRRV and LSGQRGAGPGNSAYTPRRSQGGPRAATT. Over residues 63–76 the composition is skewed to basic and acidic residues; sequence KPDRVRPGQRDRIG. Over residues 87-97 the composition is skewed to low complexity; the sequence is AGQARAASSRR. The chain crosses the membrane as a helical span at residues 261–281; sequence CILTALLAVSFHSIGVVIMTS.

Its subcellular location is the membrane. This is an uncharacterized protein from Homo sapiens (Human).